Consider the following 593-residue polypeptide: MEKLSALQEQKGELRKRLSYTTHKLEKLETEFDSTRHYLEIELRRAQEELEKVTEKLRRIQSNYMALQRINQELEDKLYRMGQHYEEEKRALSHEIVALNSHLLEAKVTIDKLSEDNELYRKDCNLAAQLLQCSQTYGRVHKVSELPSDFQERVSLHMEKHGCSLPSPLCHPAYADSVPTCVIAKVLEKPDPASLSSRLSDASARDLAFCDGVEKPGPRPPYKGDIYCSDTALYCPEERRRDRRPSVDAPVTDVGFLRAQNSTDSAAEEEEEAEAAAFPAGFQHEAFPSYAGSLPTSSSYSSFSATSEEKEHAQASTLTASQQAIYLNSRDELFDRKPPATTYEGSPRFAKATAAVAAPLEAEVAPGFGRTMSPYPAETFRFPASPGPQQALMPPNLWSLRAKPGTARLPGEDMRGQWRPLSVEDIGAYSYPVSAAGRASPCSFSERYYGGAGGSPGKKADGRASPLYASYKADSFSEGDDLSQGHLAEPCFLRAGGDLSLSPGRSADPLPGYAPSEGGDGDRLGVQLCGTASSPEPEQGSRDSLEPSSMEASPEMHPAARLSPQQAFPRTGGSGLSRKDSLTKAQLYGTLLN.

The residue at position 1 (methionine 1) is an N-acetylmethionine. Tyrosine 137 carries the post-translational modification Phosphotyrosine. Serine 200, serine 229, serine 246, serine 265, serine 346, and serine 373 each carry phosphoserine. Position 381 is an asymmetric dimethylarginine (arginine 381). 9 positions are modified to phosphoserine: serine 455, serine 465, serine 475, serine 477, serine 500, serine 502, serine 506, serine 553, and serine 563. Residues 499–593 (LSLSPGRSAD…KAQLYGTLLN (95 aa)) are disordered.

Interacts with DLG4 and DLGAP1 and forms a ternary complex.

It is found in the cytoplasm. The protein localises to the membrane. In terms of biological role, may sustain the structure of the postsynaptic density (PSD). This is Brain-enriched guanylate kinase-associated protein (BEGAIN) from Homo sapiens (Human).